Consider the following 316-residue polypeptide: Aspartate carbamoyltransferase catalytic subunit (316 aa).

Positions 58 and 59 each coordinate carbamoyl phosphate. K86 is an L-aspartate binding site. 3 residues coordinate carbamoyl phosphate: R108, H136, and Q139. The L-aspartate site is built by R169 and R223. 2 residues coordinate carbamoyl phosphate: G264 and P265.

It belongs to the aspartate/ornithine carbamoyltransferase superfamily. ATCase family. In terms of assembly, heterododecamer (2C3:3R2) of six catalytic PyrB chains organized as two trimers (C3), and six regulatory PyrI chains organized as three dimers (R2).

The catalysed reaction is carbamoyl phosphate + L-aspartate = N-carbamoyl-L-aspartate + phosphate + H(+). The protein operates within pyrimidine metabolism; UMP biosynthesis via de novo pathway; (S)-dihydroorotate from bicarbonate: step 2/3. Functionally, catalyzes the condensation of carbamoyl phosphate and aspartate to form carbamoyl aspartate and inorganic phosphate, the committed step in the de novo pyrimidine nucleotide biosynthesis pathway. The chain is Aspartate carbamoyltransferase catalytic subunit from Dinoroseobacter shibae (strain DSM 16493 / NCIMB 14021 / DFL 12).